We begin with the raw amino-acid sequence, 104 residues long: 11 kDa late embryogenesis abundant protein (104 aa).

A compositionally biased stretch (low complexity) spans 1–24 (MQSGKNAAASAKETAANVAASAKA). The interval 1-104 (MQSGKNAAAS…TGHRTGTGGI (104 aa)) is disordered. The segment covering 25–74 (GMEKTKASLQEKGEKMTAHDPMQKEMAREKKEERKHEAEYEKQAAKEHNA) has biased composition (basic and acidic residues). The span at 75-89 (AQKQTTGIGTGTHSY) shows a compositional bias: polar residues.

Belongs to the LEA type 1 family. Maximally expressed in dry seeds. Also present in mid-maturation embryos.

Functionally, LEA proteins are late embryonic proteins abundant in higher plant seed embryos. They may play an essential role in seed survival and in controlling water exchanges during seed desiccation and imbibition. The protein is 11 kDa late embryogenesis abundant protein of Helianthus annuus (Common sunflower).